The following is a 209-amino-acid chain: UPF0174 protein HP_1587 (209 aa).

The protein belongs to the UPF0174 family.

The polypeptide is UPF0174 protein HP_1587 (Helicobacter pylori (strain ATCC 700392 / 26695) (Campylobacter pylori)).